The sequence spans 204 residues: Urease accessory protein UreG (204 aa).

Gly12 to Thr19 contacts GTP.

It belongs to the SIMIBI class G3E GTPase family. UreG subfamily. Homodimer. UreD, UreF and UreG form a complex that acts as a GTP-hydrolysis-dependent molecular chaperone, activating the urease apoprotein by helping to assemble the nickel containing metallocenter of UreC. The UreE protein probably delivers the nickel.

The protein localises to the cytoplasm. Functionally, facilitates the functional incorporation of the urease nickel metallocenter. This process requires GTP hydrolysis, probably effectuated by UreG. This is Urease accessory protein UreG from Stutzerimonas stutzeri (strain A1501) (Pseudomonas stutzeri).